A 109-amino-acid polypeptide reads, in one-letter code: Putative transposase MJ0856.1 (109 aa).

Zn(2+)-binding residues include cysteine 36, cysteine 39, cysteine 62, and cysteine 65.

Belongs to the transposase 35 family.

This Methanocaldococcus jannaschii (strain ATCC 43067 / DSM 2661 / JAL-1 / JCM 10045 / NBRC 100440) (Methanococcus jannaschii) protein is Putative transposase MJ0856.1.